Consider the following 509-residue polypeptide: Maturase K (509 aa).

Belongs to the intron maturase 2 family. MatK subfamily.

The protein resides in the plastid. Its subcellular location is the chloroplast. Its function is as follows. Usually encoded in the trnK tRNA gene intron. Probably assists in splicing its own and other chloroplast group II introns. This chain is Maturase K, found in Nicotiana glauca (Glaucous tobacco).